Consider the following 103-residue polypeptide: Large ribosomal subunit protein uL24 (103 aa).

Belongs to the universal ribosomal protein uL24 family. Part of the 50S ribosomal subunit.

In terms of biological role, one of two assembly initiator proteins, it binds directly to the 5'-end of the 23S rRNA, where it nucleates assembly of the 50S subunit. Its function is as follows. One of the proteins that surrounds the polypeptide exit tunnel on the outside of the subunit. The protein is Large ribosomal subunit protein uL24 of Lacticaseibacillus casei (strain BL23) (Lactobacillus casei).